A 631-amino-acid chain; its full sequence is Peptidyl-prolyl cis-trans isomerase CYP71 (631 aa).

Residues 26–45 (VEEEEPMVGPGPAPRGKRKR) form a disordered region. WD repeat units follow at residues 68–106 (MHRD…IEFA), 111–150 (SHLG…MMAM), 201–240 (IHMN…FPED), and 257–297 (KCKT…RRVY). The 155-residue stretch at 474–628 (LPENVIMHTT…QDVKILNVTV (155 aa)) folds into the PPIase cyclophilin-type domain.

It belongs to the cyclophilin-type PPIase family. Interacts with FAS1 and LHP1. Interacts (via WD repeat domain) with histone H3. Ubiquitous. Expressed in the meristems.

It localises to the nucleus. It catalyses the reaction [protein]-peptidylproline (omega=180) = [protein]-peptidylproline (omega=0). Its function is as follows. PPIases accelerate the folding of proteins. It catalyzes the cis-trans isomerization of proline imidic peptide bonds in oligopeptides. Histone proline isomerase that increases the rate of cis-trans isomerization of the synthetic histone H3 peptides H3P30 (RKSAP30F-p-nitroanilide) and H3P30K27me3 (RKme3-SAP30F-p-nitroanilide) in the histone H3 N-terminal tail, in vitro. Histone remodeling factor involved in chromatin-based gene silencing. Reinforces H3K27 methylation. Involved in fundamental processes of chromatin assembly and histone modification by mediating the targeting of FAS1 and LHP1 on the chromatin. Required for the formation and development of leaves, for normal phyllotaxy and for the formation, maintenance and activity of root and shoot apical meristems. The protein is Peptidyl-prolyl cis-trans isomerase CYP71 of Arabidopsis thaliana (Mouse-ear cress).